We begin with the raw amino-acid sequence, 369 residues long: UDP-3-O-acylglucosamine N-acyltransferase (369 aa).

The Proton acceptor role is filled by histidine 263.

It belongs to the transferase hexapeptide repeat family. LpxD subfamily. In terms of assembly, homotrimer.

The enzyme catalyses a UDP-3-O-[(3R)-3-hydroxyacyl]-alpha-D-glucosamine + a (3R)-hydroxyacyl-[ACP] = a UDP-2-N,3-O-bis[(3R)-3-hydroxyacyl]-alpha-D-glucosamine + holo-[ACP] + H(+). The protein operates within bacterial outer membrane biogenesis; LPS lipid A biosynthesis. Functionally, catalyzes the N-acylation of UDP-3-O-acylglucosamine using 3-hydroxyacyl-ACP as the acyl donor. Is involved in the biosynthesis of lipid A, a phosphorylated glycolipid that anchors the lipopolysaccharide to the outer membrane of the cell. This is UDP-3-O-acylglucosamine N-acyltransferase from Burkholderia ambifaria (strain MC40-6).